The chain runs to 373 residues: Queuine tRNA-ribosyltransferase (373 aa).

The active-site Proton acceptor is D93. Substrate contacts are provided by residues 93-97 (DSGGF), D147, Q191, and G218. Residues 249–255 (GVGAPRD) are RNA binding. The active-site Nucleophile is the D268. Residues 273 to 277 (TRNAR) form an RNA binding; important for wobble base 34 recognition region. Zn(2+) contacts are provided by C306, C308, C311, and H337.

Belongs to the queuine tRNA-ribosyltransferase family. Homodimer. Within each dimer, one monomer is responsible for RNA recognition and catalysis, while the other monomer binds to the replacement base PreQ1. Zn(2+) serves as cofactor.

It carries out the reaction 7-aminomethyl-7-carbaguanine + guanosine(34) in tRNA = 7-aminomethyl-7-carbaguanosine(34) in tRNA + guanine. The protein operates within tRNA modification; tRNA-queuosine biosynthesis. Functionally, catalyzes the base-exchange of a guanine (G) residue with the queuine precursor 7-aminomethyl-7-deazaguanine (PreQ1) at position 34 (anticodon wobble position) in tRNAs with GU(N) anticodons (tRNA-Asp, -Asn, -His and -Tyr). Catalysis occurs through a double-displacement mechanism. The nucleophile active site attacks the C1' of nucleotide 34 to detach the guanine base from the RNA, forming a covalent enzyme-RNA intermediate. The proton acceptor active site deprotonates the incoming PreQ1, allowing a nucleophilic attack on the C1' of the ribose to form the product. After dissociation, two additional enzymatic reactions on the tRNA convert PreQ1 to queuine (Q), resulting in the hypermodified nucleoside queuosine (7-(((4,5-cis-dihydroxy-2-cyclopenten-1-yl)amino)methyl)-7-deazaguanosine). In Solidesulfovibrio magneticus (strain ATCC 700980 / DSM 13731 / RS-1) (Desulfovibrio magneticus), this protein is Queuine tRNA-ribosyltransferase.